The chain runs to 388 residues: Chorismate synthase (388 aa).

2 residues coordinate NADP(+): Arg-39 and Arg-45. FMN contacts are provided by residues 130–132, 251–252, Gly-296, 311–315, and Arg-337; these read RSS, NA, and KPIPT.

Belongs to the chorismate synthase family. In terms of assembly, homotetramer. The cofactor is FMNH2.

It catalyses the reaction 5-O-(1-carboxyvinyl)-3-phosphoshikimate = chorismate + phosphate. Its pathway is metabolic intermediate biosynthesis; chorismate biosynthesis; chorismate from D-erythrose 4-phosphate and phosphoenolpyruvate: step 7/7. Functionally, catalyzes the anti-1,4-elimination of the C-3 phosphate and the C-6 proR hydrogen from 5-enolpyruvylshikimate-3-phosphate (EPSP) to yield chorismate, which is the branch point compound that serves as the starting substrate for the three terminal pathways of aromatic amino acid biosynthesis. This reaction introduces a second double bond into the aromatic ring system. The protein is Chorismate synthase of Geobacillus kaustophilus (strain HTA426).